Reading from the N-terminus, the 299-residue chain is Glycine--tRNA ligase alpha subunit (299 aa).

It belongs to the class-II aminoacyl-tRNA synthetase family. In terms of assembly, tetramer of two alpha and two beta subunits.

The protein resides in the cytoplasm. The enzyme catalyses tRNA(Gly) + glycine + ATP = glycyl-tRNA(Gly) + AMP + diphosphate. The chain is Glycine--tRNA ligase alpha subunit from Pediococcus pentosaceus (strain ATCC 25745 / CCUG 21536 / LMG 10740 / 183-1w).